Consider the following 430-residue polypeptide: Adenylosuccinate synthetase (430 aa).

Residues 13 to 19 and 41 to 43 each bind GTP; these read GDEGKGK and GHT. The Proton acceptor role is filled by D14. 2 residues coordinate Mg(2+): D14 and G41. Residues 14 to 17, 39 to 42, T130, R144, Q225, T240, and R304 contribute to the IMP site; these read DEGK and NAGH. H42 (proton donor) is an active-site residue. Residue 300-306 participates in substrate binding; it reads STTGRAR. Residues R306, 332–334, and 414–416 contribute to the GTP site; these read KLD and STG.

This sequence belongs to the adenylosuccinate synthetase family. Homodimer. Mg(2+) is required as a cofactor.

It localises to the cytoplasm. It catalyses the reaction IMP + L-aspartate + GTP = N(6)-(1,2-dicarboxyethyl)-AMP + GDP + phosphate + 2 H(+). It functions in the pathway purine metabolism; AMP biosynthesis via de novo pathway; AMP from IMP: step 1/2. Plays an important role in the de novo pathway of purine nucleotide biosynthesis. Catalyzes the first committed step in the biosynthesis of AMP from IMP. The protein is Adenylosuccinate synthetase of Pseudomonas putida (strain ATCC 700007 / DSM 6899 / JCM 31910 / BCRC 17059 / LMG 24140 / F1).